Here is a 76-residue protein sequence, read N- to C-terminus: Large ribosomal subunit protein uL24 (76 aa).

It belongs to the universal ribosomal protein uL24 family. Part of the 50S ribosomal subunit.

In terms of biological role, one of two assembly initiator proteins, it binds directly to the 5'-end of the 23S rRNA, where it nucleates assembly of the 50S subunit. Functionally, one of the proteins that surrounds the polypeptide exit tunnel on the outside of the subunit. This Sulfurimonas denitrificans (strain ATCC 33889 / DSM 1251) (Thiomicrospira denitrificans (strain ATCC 33889 / DSM 1251)) protein is Large ribosomal subunit protein uL24.